Reading from the N-terminus, the 160-residue chain is Transcription elongation factor GreA (160 aa).

The stretch at 3–84 (NIVDDKILLT…SKAKIIKADL (82 aa)) forms a coiled coil.

The protein belongs to the GreA/GreB family.

Necessary for efficient RNA polymerase transcription elongation past template-encoded arresting sites. The arresting sites in DNA have the property of trapping a certain fraction of elongating RNA polymerases that pass through, resulting in locked ternary complexes. Cleavage of the nascent transcript by cleavage factors such as GreA or GreB allows the resumption of elongation from the new 3'terminus. GreA releases sequences of 2 to 3 nucleotides. The protein is Transcription elongation factor GreA of Mesomycoplasma hyopneumoniae (strain J / ATCC 25934 / NCTC 10110) (Mycoplasma hyopneumoniae).